Here is a 101-residue protein sequence, read N- to C-terminus: uncharacterized protein (101 aa).

2 helical membrane passes run 52–72 (VVFI…VKLL) and 75–95 (LWRL…SLLG).

The protein resides in the endoplasmic reticulum membrane. This is an uncharacterized protein from Schizosaccharomyces pombe (strain 972 / ATCC 24843) (Fission yeast).